A 370-amino-acid chain; its full sequence is Phospho-2-dehydro-3-deoxyheptonate aldolase, tyrosine-inhibited (370 aa).

The protein belongs to the class-I DAHP synthase family.

It carries out the reaction D-erythrose 4-phosphate + phosphoenolpyruvate + H2O = 7-phospho-2-dehydro-3-deoxy-D-arabino-heptonate + phosphate. It functions in the pathway metabolic intermediate biosynthesis; chorismate biosynthesis; chorismate from D-erythrose 4-phosphate and phosphoenolpyruvate: step 1/7. With respect to regulation, inhibited by tyrosine. Its function is as follows. Stereospecific condensation of phosphoenolpyruvate (PEP) and D-erythrose-4-phosphate (E4P) giving rise to 3-deoxy-D-arabino-heptulosonate-7-phosphate (DAHP). The sequence is that of Phospho-2-dehydro-3-deoxyheptonate aldolase, tyrosine-inhibited (ARO4) from Candida albicans (strain SC5314 / ATCC MYA-2876) (Yeast).